Reading from the N-terminus, the 236-residue chain is UPF0177 protein YaiH (236 aa).

Transmembrane regions (helical) follow at residues 16–36 (YFSL…ILGY), 51–71 (ATAT…GILI), 90–110 (ILFL…TFTY), 131–151 (IVFP…FEEA), 180–200 (TGAN…TLIY), and 210–230 (ILVH…LQTI).

The protein belongs to the UPF0177 family.

It localises to the cell membrane. The sequence is that of UPF0177 protein YaiH (yaiH) from Lactococcus lactis subsp. lactis (strain IL1403) (Streptococcus lactis).